The sequence spans 222 residues: uncharacterized protein (222 aa).

The tract at residues 142–222 (ARRGGCVHPP…LPDPPSAGHL (81 aa)) is disordered. Residues 160–169 (QSRSISSRRA) are compositionally biased toward low complexity. Residues 182-196 (PRRRPHRHRTRPQTR) are compositionally biased toward basic residues.

This sequence belongs to the Rv1128c/1148c/1588c/1702c/1945/3466 family.

This is an uncharacterized protein from Mycobacterium tuberculosis (strain ATCC 25618 / H37Rv).